Here is a 722-residue protein sequence, read N- to C-terminus: Bifunctional UDP-N-acetylglucosamine 2-epimerase/N-acetylmannosamine kinase (722 aa).

The UDP site is built by arginine 19, serine 23, arginine 113, histidine 220, and asparagine 253. The CMP-N-acetyl-beta-neuraminate site is built by lysine 259, glutamate 271, lysine 280, and histidine 281. Residues valine 282, serine 301, serine 302, glutamate 307, and arginine 321 each coordinate UDP. The segment at 406 to 722 is N-acetylmannosamine kinase; sequence TLSALAVDLG…VLDYTTRRIH (317 aa). Position 413 (aspartate 413) interacts with Mg(2+). Glycine 416 contacts an N-acyl-D-mannosamine 6-phosphate. Residues threonine 417, asparagine 418, and arginine 420 each contribute to the ADP site. Positions 476, 477, 489, 516, 517, and 545 each coordinate an N-acyl-D-mannosamine 6-phosphate. An N-acyl-D-mannosamine-binding residues include glycine 476, arginine 477, threonine 489, asparagine 516, and aspartate 517. Residue aspartate 517 is part of the active site. An N-acyl-D-mannosamine-binding residues include glutamate 566 and histidine 569. Position 569 (histidine 569) interacts with an N-acyl-D-mannosamine 6-phosphate. Zn(2+) contacts are provided by histidine 569, cysteine 579, cysteine 581, and cysteine 586. An N-acyl-D-mannosamine 6-phosphate is bound at residue glutamate 588. Glutamate 588 contributes to the an N-acyl-D-mannosamine binding site.

It in the N-terminal section; belongs to the UDP-N-acetylglucosamine 2-epimerase family. This sequence in the C-terminal section; belongs to the ROK (NagC/XylR) family. As to quaternary structure, homodimer. Homotetramer. Homohexamer. The hexameric form exhibits both enzyme activities, whereas the dimeric form only catalyzes the phosphorylation of N-acyl-D-mannosamine. Phosphorylated. Phosphorylation by PKC activates the UDP-N-acetylglucosamine 2-epimerase activity. Widely expressed. Highest expression is observed in liver.

It is found in the cytoplasm. The protein resides in the cytosol. It carries out the reaction UDP-N-acetyl-alpha-D-glucosamine + H2O = aldehydo-N-acetyl-D-mannosamine + UDP + H(+). The enzyme catalyses an N-acyl-D-mannosamine + ATP = an N-acyl-D-mannosamine 6-phosphate + ADP + H(+). It participates in amino-sugar metabolism; N-acetylneuraminate biosynthesis. Its activity is regulated as follows. The UDP-N-acetylglucosamine 2-epimerase activity, in contrast to the N-acetylmannosamine kinase activity, exhibits allosteric regulation by cytidine monophosphate-N-acetylneuraminic acid (CMP-Neu5Ac), the end product of neuraminic acid biosynthesis. Moreover, the activity is contingent upon the oligomeric state of the enzyme. The monomeric form is inactive, while the dimeric form selectively catalyzes the phosphorylation of N-acetylmannosamine. The hexameric form, on the other hand, demonstrates full proficiency in both enzyme activities. Furthermore, the UDP-N-acetylglucosamine 2-epimerase activity is increased by PKC-mediated phosphorylation. Its function is as follows. Bifunctional enzyme that possesses both UDP-N-acetylglucosamine 2-epimerase and N-acetylmannosamine kinase activities, and serves as the initiator of the biosynthetic pathway leading to the production of N-acetylneuraminic acid (NeuAc), a critical precursor in the synthesis of sialic acids. By catalyzing this pivotal and rate-limiting step in sialic acid biosynthesis, this enzyme assumes a pivotal role in governing the regulation of cell surface sialylation. Sialic acids represent a category of negatively charged sugars that reside on the surface of cells as terminal components of glycoconjugates and mediate important functions in various cellular processes, including cell adhesion, signal transduction, and cellular recognition. This chain is Bifunctional UDP-N-acetylglucosamine 2-epimerase/N-acetylmannosamine kinase, found in Rattus norvegicus (Rat).